We begin with the raw amino-acid sequence, 120 residues long: Large ribosomal subunit protein bL19 (120 aa).

The protein belongs to the bacterial ribosomal protein bL19 family.

In terms of biological role, this protein is located at the 30S-50S ribosomal subunit interface and may play a role in the structure and function of the aminoacyl-tRNA binding site. The polypeptide is Large ribosomal subunit protein bL19 (Thermodesulfovibrio yellowstonii (strain ATCC 51303 / DSM 11347 / YP87)).